We begin with the raw amino-acid sequence, 121 residues long: Ribosome-binding factor A (121 aa).

The protein belongs to the RbfA family. As to quaternary structure, monomer. Binds 30S ribosomal subunits, but not 50S ribosomal subunits or 70S ribosomes.

It localises to the cytoplasm. Functionally, one of several proteins that assist in the late maturation steps of the functional core of the 30S ribosomal subunit. Associates with free 30S ribosomal subunits (but not with 30S subunits that are part of 70S ribosomes or polysomes). Required for efficient processing of 16S rRNA. May interact with the 5'-terminal helix region of 16S rRNA. This chain is Ribosome-binding factor A, found in Finegoldia magna (strain ATCC 29328 / DSM 20472 / WAL 2508) (Peptostreptococcus magnus).